Here is a 166-residue protein sequence, read N- to C-terminus: Packaging efficiency factor P6 (166 aa).

Residues I134–I166 form a disordered region.

Heterodimer of P6 and P9; further multimerizes as hexamers of heterodimers. Part of the dodecameric portal complex that is composed of the packaging efficiency factor P6, the DNA packaging ATPase P9, and the internal heterododecamer P20/P22 which spans the virion inner membrane.

It localises to the virion. In terms of biological role, together with the packaging ATPase P9, forms the external part of the portal vertex that is embeded in the capsid and which plays critical roles in genome packaging and genome ejection. Both proteins multimerize as a single ring-shaped heterdodecamer arranged around a central channel. This chain is Packaging efficiency factor P6 (VI), found in Acinetobacter calcoaceticus (Arthrobacter siderocapsulatus).